The chain runs to 346 residues: Fe(3+) ions import ATP-binding protein FbpC 2 (346 aa).

In terms of domain architecture, ABC transporter spans 2-234 (LELHRVSKSF…PNSEDIATFL (233 aa)). An ATP-binding site is contributed by 34-41 (GPSGSGKT).

The protein belongs to the ABC transporter superfamily. Fe(3+) ion importer (TC 3.A.1.10) family. In terms of assembly, the complex is composed of two ATP-binding proteins (FbpC), two transmembrane proteins (FbpB) and a solute-binding protein (FbpA).

The protein localises to the cell inner membrane. The enzyme catalyses Fe(3+)(out) + ATP + H2O = Fe(3+)(in) + ADP + phosphate + H(+). Part of the ABC transporter complex FbpABC involved in Fe(3+) ions import. Responsible for energy coupling to the transport system. The protein is Fe(3+) ions import ATP-binding protein FbpC 2 of Pectobacterium atrosepticum (strain SCRI 1043 / ATCC BAA-672) (Erwinia carotovora subsp. atroseptica).